The sequence spans 122 residues: Defensin-like protein 181 (122 aa).

The signal sequence occupies residues Met-1–Ala-26. 8 disulfide bridges follow: Cys-29/Cys-70, Cys-36/Cys-55, Cys-39/Cys-64, Cys-43/Cys-66, Cys-76/Cys-122, Cys-87/Cys-107, Cys-92/Cys-116, and Cys-96/Cys-118.

This sequence belongs to the DEFL family.

It localises to the secreted. In terms of biological role, confers broad-spectrum resistance to pathogens. This chain is Defensin-like protein 181 (PDF3.1), found in Arabidopsis thaliana (Mouse-ear cress).